Reading from the N-terminus, the 502-residue chain is Maturase K (502 aa).

Belongs to the intron maturase 2 family. MatK subfamily.

It is found in the plastid. Its subcellular location is the chloroplast. Usually encoded in the trnK tRNA gene intron. Probably assists in splicing its own and other chloroplast group II introns. In Theobroma cacao (Cacao), this protein is Maturase K.